Reading from the N-terminus, the 20-residue chain is Unknown protein from 2D-PAGE of needles (20 aa).

The polypeptide is Unknown protein from 2D-PAGE of needles (Pinus pinaster (Maritime pine)).